The following is a 282-amino-acid chain: 2,3,4,5-tetrahydropyridine-2,6-dicarboxylate N-succinyltransferase (282 aa).

The substrate site is built by arginine 109 and aspartate 146.

It belongs to the transferase hexapeptide repeat family. As to quaternary structure, homotrimer.

It is found in the cytoplasm. It catalyses the reaction (S)-2,3,4,5-tetrahydrodipicolinate + succinyl-CoA + H2O = (S)-2-succinylamino-6-oxoheptanedioate + CoA. Its pathway is amino-acid biosynthesis; L-lysine biosynthesis via DAP pathway; LL-2,6-diaminopimelate from (S)-tetrahydrodipicolinate (succinylase route): step 1/3. The sequence is that of 2,3,4,5-tetrahydropyridine-2,6-dicarboxylate N-succinyltransferase from Bartonella henselae (strain ATCC 49882 / DSM 28221 / CCUG 30454 / Houston 1) (Rochalimaea henselae).